An 801-amino-acid polypeptide reads, in one-letter code: Na(+)/H(+) antiporter subunit A (801 aa).

Helical transmembrane passes span 4–21 (LHLA…IPFL), 28–50 (VHTG…PMIR), 80–102 (GLLF…IFYL), 109–128 (LGPF…GVVL), 132–154 (VMVL…GYWY), 166–188 (SLLI…YLIT), 203–222 (IAGH…GAFT), 229–251 (FYIW…HSAT), 266–288 (IFAF…MVWG), 301–323 (ILAF…SAAA), 338–360 (AAIF…VGII), 372–394 (LGGL…FSMA), 428–450 (VLFP…KLLF), 471–493 (VGML…FPNI), 526–548 (GVTT…YLSL), 594–616 (YLLY…KGGF), 626–647 (IGVY…TVFA), 654–671 (IIAL…FVIF), 676–698 (LALT…FYHL), 710–732 (FRMT…GIAS), and 772–789 (MFEI…YSMI).

It belongs to the CPA3 antiporters (TC 2.A.63) subunit A family. As to quaternary structure, forms a heterooligomeric complex that consists of seven subunits: MrpA, MrpB, MrpC, MrpD, MrpE, MrpF and MrpG.

It localises to the cell membrane. Its function is as follows. Mrp complex is a Na(+)/H(+) antiporter that is considered to be the major Na(+) excretion system in B.subtilis. Has a major role in Na(+) resistance and a minor role in Na(+)- and K(+)-dependent pH homeostasis as compared to TetB. MrpA may be the actual Na(+)/H(+) antiporter, although the six other Mrp proteins are all required for Na(+)/H(+) antiport activity and Na(+) resistance. MrpA is required for initiation of sporulation when external Na(+) concentration increases. Also transports Li(+) but not K(+), Ca(2+) or Mg(2+). The polypeptide is Na(+)/H(+) antiporter subunit A (mrpA) (Bacillus subtilis (strain 168)).